The following is a 191-amino-acid chain: UPF0312 protein Sbal_3041 (191 aa).

The N-terminal stretch at 1 to 22 is a signal peptide; sequence MKKQLLSALIGASLLAPMAASA.

Belongs to the UPF0312 family. Type 1 subfamily.

It localises to the periplasm. The protein is UPF0312 protein Sbal_3041 of Shewanella baltica (strain OS155 / ATCC BAA-1091).